A 393-amino-acid chain; its full sequence is S-adenosylmethionine synthase 2 (393 aa).

Glu9 lines the Mg(2+) pocket. His15 is an ATP binding site. Residue Glu43 participates in K(+) binding. Residues Glu56 and Gln99 each contribute to the L-methionine site. ATP contacts are provided by residues 167-169 (DGK), 235-238 (SGRF), Asp246, 252-253 (RK), Ala269, Lys273, and Lys277. Residue Asp246 participates in L-methionine binding. Residue Lys277 participates in L-methionine binding.

The protein belongs to the AdoMet synthase family. Homotetramer. Requires Mn(2+) as cofactor. Mg(2+) serves as cofactor. The cofactor is Co(2+). K(+) is required as a cofactor.

Its subcellular location is the cytoplasm. The catalysed reaction is L-methionine + ATP + H2O = S-adenosyl-L-methionine + phosphate + diphosphate. It participates in amino-acid biosynthesis; S-adenosyl-L-methionine biosynthesis; S-adenosyl-L-methionine from L-methionine: step 1/1. Catalyzes the formation of S-adenosylmethionine from methionine and ATP. The reaction comprises two steps that are both catalyzed by the same enzyme: formation of S-adenosylmethionine (AdoMet) and triphosphate, and subsequent hydrolysis of the triphosphate. This is S-adenosylmethionine synthase 2 (METK2) from Populus trichocarpa (Western balsam poplar).